We begin with the raw amino-acid sequence, 425 residues long: Serine--tRNA ligase (425 aa).

228–230 (TSE) contributes to the L-serine binding site. 259–261 (RSE) contacts ATP. Glu282 is a binding site for L-serine. 346–349 (EISS) is an ATP binding site. Position 384 (Ser384) interacts with L-serine.

Belongs to the class-II aminoacyl-tRNA synthetase family. Type-1 seryl-tRNA synthetase subfamily. Homodimer. The tRNA molecule binds across the dimer.

Its subcellular location is the cytoplasm. The enzyme catalyses tRNA(Ser) + L-serine + ATP = L-seryl-tRNA(Ser) + AMP + diphosphate + H(+). It catalyses the reaction tRNA(Sec) + L-serine + ATP = L-seryl-tRNA(Sec) + AMP + diphosphate + H(+). The protein operates within aminoacyl-tRNA biosynthesis; selenocysteinyl-tRNA(Sec) biosynthesis; L-seryl-tRNA(Sec) from L-serine and tRNA(Sec): step 1/1. Catalyzes the attachment of serine to tRNA(Ser). Is also able to aminoacylate tRNA(Sec) with serine, to form the misacylated tRNA L-seryl-tRNA(Sec), which will be further converted into selenocysteinyl-tRNA(Sec). The protein is Serine--tRNA ligase of Ehrlichia ruminantium (strain Gardel).